Reading from the N-terminus, the 132-residue chain is Small ribosomal subunit protein uS8 (132 aa).

This sequence belongs to the universal ribosomal protein uS8 family. As to quaternary structure, part of the 30S ribosomal subunit. Contacts proteins S5 and S12.

Its function is as follows. One of the primary rRNA binding proteins, it binds directly to 16S rRNA central domain where it helps coordinate assembly of the platform of the 30S subunit. This Streptococcus pneumoniae serotype 19F (strain G54) protein is Small ribosomal subunit protein uS8.